Here is a 1391-residue protein sequence, read N- to C-terminus: DNA-directed RNA polymerase subunit beta' (1391 aa).

Positions 72, 74, 87, and 90 each coordinate Zn(2+). Mg(2+) is bound by residues Asp-462, Asp-464, and Asp-466. Residues Cys-816, Cys-890, Cys-897, and Cys-900 each coordinate Zn(2+).

The protein belongs to the RNA polymerase beta' chain family. As to quaternary structure, the RNAP catalytic core consists of 2 alpha, 1 beta, 1 beta' and 1 omega subunit. When a sigma factor is associated with the core the holoenzyme is formed, which can initiate transcription. Mg(2+) is required as a cofactor. The cofactor is Zn(2+).

It carries out the reaction RNA(n) + a ribonucleoside 5'-triphosphate = RNA(n+1) + diphosphate. Functionally, DNA-dependent RNA polymerase catalyzes the transcription of DNA into RNA using the four ribonucleoside triphosphates as substrates. This is DNA-directed RNA polymerase subunit beta' from Neisseria meningitidis serogroup C / serotype 2a (strain ATCC 700532 / DSM 15464 / FAM18).